Reading from the N-terminus, the 1198-residue chain is DNA polymerase (1198 aa).

3 disordered regions span residues 1-90 (MALV…TVVA), 179-198 (LEQP…QPNP), and 906-931 (ALAD…PSGT). Positions 30-40 (QQPPRAAPAPA) are enriched in low complexity.

This sequence belongs to the DNA polymerase type-B family. Heterodimer with the terminal protein; this heterodimer binds to bp 9 to 18 of the genome. Forms a complex with viral pTP, DBP and hosts NFIA and POU2F1/OCT1 for initiation of replication.

It is found in the host nucleus. The catalysed reaction is DNA(n) + a 2'-deoxyribonucleoside 5'-triphosphate = DNA(n+1) + diphosphate. Functionally, eukaryotic-type DNA polymerase involved in viral genomic replication. DNA synthesis is protein primed, and acts in a strand displacement replication. Assembles in complex with viral pTP, DBP, host NFIA and host POU2F1/OCT1 on viral origin of replication. The polymerase covalently transfers dCMP onto pTP, thereby initiating complementary strand synthesis. The polypeptide is DNA polymerase (Homo sapiens (Human)).